A 202-amino-acid polypeptide reads, in one-letter code: PITH domain-containing protein 1 (202 aa).

The region spanning 11-184 is the PITH domain; it reads SHGVDDGIEY…IVNTVYESKP (174 aa).

This sequence belongs to the PITHD1 family.

This Dictyostelium discoideum (Social amoeba) protein is PITH domain-containing protein 1.